A 101-amino-acid polypeptide reads, in one-letter code: Class II hydrophobin 5 (101 aa).

The signal sequence occupies residues 1 to 15 (MQLTALLALATLAIA). 4 disulfide bridges follow: Cys33/Cys83, Cys44/Cys74, Cys45/Cys57, and Cys84/Cys95.

Belongs to the cerato-ulmin hydrophobin family. As to quaternary structure, homodimer. Homodimers further self-assemble to form highly ordered films at water-air interfaces through intermolecular interactions.

The protein localises to the secreted. The protein resides in the cell wall. In terms of biological role, aerial growth, conidiation, and dispersal of filamentous fungi in the environment rely upon a capability of their secreting small amphipathic proteins called hydrophobins (HPBs) with low sequence identity. Class I can self-assemble into an outermost layer of rodlet bundles on aerial cell surfaces, conferring cellular hydrophobicity that supports fungal growth, development and dispersal; whereas Class II form highly ordered films at water-air interfaces through intermolecular interactions but contribute nothing to the rodlet structure. This is Class II hydrophobin 5 from Trichoderma asperellum (strain ATCC 204424 / CBS 433.97 / NBRC 101777).